We begin with the raw amino-acid sequence, 147 residues long: Leghemoglobin 3 (147 aa).

The Globin domain maps to 2–147; sequence GFTAQQEALV…LATAIKKAMG (146 aa). Nitrated tyrosine is present on Tyr-30. Ser-45 contacts heme b. Phosphoserine is present on Ser-45. His-61 is an O2 binding site. 3 residues coordinate heme b: Lys-64, His-93, and Lys-96. At Tyr-135 the chain carries Nitrated tyrosine.

It belongs to the plant globin family. In terms of assembly, monomer. Post-translationally, nitrated in effective nodules and particularly in hypoxic conditions; this mechanism may play a protective role in the symbiosis by buffering toxic peroxynitrite NO(2)(-). Nitration level decrease during nodule senescence. Phosphorylation at Ser-45 disrupts the molecular environment of its porphyrin ring oxygen binding pocket, thus leading to a reduced oxygen consumption and to the delivery of oxygen O(2) to symbiosomes. Specifically and strongly expressed in root nodules and at low levels in seedlings.

Its subcellular location is the cytoplasm. It is found in the cytosol. The protein resides in the nucleus. Its function is as follows. Leghemoglobin that reversibly binds oxygen O(2) through a pentacoordinated heme iron. In root nodules, facilitates the diffusion of oxygen to the bacteroids while preventing the bacterial nitrogenase from being inactivated by buffering dioxygen, nitric oxide and carbon monoxide, and promoting the formation of reactive oxygen species (ROS, e.g. H(2)O(2)). This role is essential for symbiotic nitrogen fixation (SNF). This is Leghemoglobin 3 from Lotus japonicus (Lotus corniculatus var. japonicus).